The chain runs to 143 residues: Transcriptional regulator MraZ (143 aa).

2 SpoVT-AbrB domains span residues 5-47 (TYTP…PRDE) and 76-119 (TDEQ…DAQA).

It belongs to the MraZ family. Forms oligomers.

The protein resides in the cytoplasm. It localises to the nucleoid. This chain is Transcriptional regulator MraZ, found in Mycolicibacterium smegmatis (strain ATCC 700084 / mc(2)155) (Mycobacterium smegmatis).